The primary structure comprises 156 residues: ATP synthase subunit b (156 aa).

Residues 7-29 (LLGQAISFALFVWFCIKFVWPPL) traverse the membrane as a helical segment.

Belongs to the ATPase B chain family. As to quaternary structure, F-type ATPases have 2 components, F(1) - the catalytic core - and F(0) - the membrane proton channel. F(1) has five subunits: alpha(3), beta(3), gamma(1), delta(1), epsilon(1). F(0) has three main subunits: a(1), b(2) and c(10-14). The alpha and beta chains form an alternating ring which encloses part of the gamma chain. F(1) is attached to F(0) by a central stalk formed by the gamma and epsilon chains, while a peripheral stalk is formed by the delta and b chains.

It localises to the cell inner membrane. Its function is as follows. F(1)F(0) ATP synthase produces ATP from ADP in the presence of a proton or sodium gradient. F-type ATPases consist of two structural domains, F(1) containing the extramembraneous catalytic core and F(0) containing the membrane proton channel, linked together by a central stalk and a peripheral stalk. During catalysis, ATP synthesis in the catalytic domain of F(1) is coupled via a rotary mechanism of the central stalk subunits to proton translocation. In terms of biological role, component of the F(0) channel, it forms part of the peripheral stalk, linking F(1) to F(0). This chain is ATP synthase subunit b, found in Shewanella sp. (strain W3-18-1).